A 353-amino-acid chain; its full sequence is Rhodopsin (353 aa).

The Extracellular portion of the chain corresponds to 1–36; the sequence is MNGTEGDNFYVPFSNKTGLARSPYEYPQYYLAEPWK. N2 and N15 each carry an N-linked (GlcNAc...) asparagine glycan. A helical transmembrane segment spans residues 37 to 61; sequence YSALAAYMFFLILVGFPVNFLTLFV. Topologically, residues 62–73 are cytoplasmic; that stretch reads TVQHKKLRTPLN. The chain crosses the membrane as a helical span at residues 74-96; that stretch reads YILLNLAMANLFMVLFGFTVTMY. Residues 97 to 110 lie on the Extracellular side of the membrane; it reads TSMNGYFVFGPTMC. C110 and C187 form a disulfide bridge. The chain crosses the membrane as a helical span at residues 111 to 133; the sequence is SIEGFFATLGGEVALWSLVVLAI. The short motif at 134-136 is the 'Ionic lock' involved in activated form stabilization element; the sequence is ERY. Residues 134-152 are Cytoplasmic-facing; that stretch reads ERYIVICKPMGNFRFGNTH. The helical transmembrane segment at 153-173 threads the bilayer; the sequence is AIMGVAFTWIMALACAAPPLV. Over 174–202 the chain is Extracellular; it reads GWSRYIPEGMQCSCGPDYYTLNPNFNNES. A helical transmembrane segment spans residues 203-224; it reads YVVYMFVVHFLVPFVIIFFCYG. Residues 225 to 252 lie on the Cytoplasmic side of the membrane; it reads RLLCTVKEAAAAQQESASTQKAEKEVTR. The chain crosses the membrane as a helical span at residues 253–274; the sequence is MVVLMVIGFLVCWVPYASVAFY. Over 275-286 the chain is Extracellular; sequence IFTHQGSDFGAT. Residues 287 to 308 traverse the membrane as a helical segment; the sequence is FMTLPAFFAKSSALYNPVIYIL. At K296 the chain carries N6-(retinylidene)lysine. Residues 309–353 lie on the Cytoplasmic side of the membrane; it reads MNKQFRNCMITTLCCGKNPLGDDESGASTSKTEVSSVSTSPVSPA. Residues 330–353 are disordered; sequence DDESGASTSKTEVSSVSTSPVSPA. Residues 336–353 show a composition bias toward low complexity; it reads STSKTEVSSVSTSPVSPA.

This sequence belongs to the G-protein coupled receptor 1 family. Opsin subfamily. Phosphorylated on some or all of the serine and threonine residues present in the C-terminal region. Post-translationally, contains one covalently linked retinal chromophore. In terms of tissue distribution, short photoreceptor cells.

It localises to the membrane. The protein resides in the cell projection. The protein localises to the cilium. Its subcellular location is the photoreceptor outer segment. Functionally, photoreceptor required for image-forming vision at low light intensity. While most salt water fish species use retinal as chromophore, most freshwater fish use 3-dehydroretinal, or a mixture of retinal and 3-dehydroretinal. Light-induced isomerization of 11-cis to all-trans retinal triggers a conformational change that activates signaling via G-proteins. Subsequent receptor phosphorylation mediates displacement of the bound G-protein alpha subunit by arrestin and terminates signaling. The sequence is that of Rhodopsin (RHO) from Lethenteron camtschaticum (Japanese lamprey).